A 238-amino-acid polypeptide reads, in one-letter code: Ribitol-5-phosphate cytidylyltransferase 2 (238 aa).

CTP contacts are provided by residues 7 to 10 (LAGG) and 81 to 87 (GTDRNET).

The protein belongs to the IspD/TarI cytidylyltransferase family. TarI subfamily. In terms of assembly, heterodimer together with TarJ.

The enzyme catalyses D-ribitol 5-phosphate + CTP + H(+) = CDP-L-ribitol + diphosphate. Its pathway is cell wall biogenesis; poly(ribitol phosphate) teichoic acid biosynthesis. Catalyzes the transfer of the cytidylyl group of CTP to D-ribitol 5-phosphate. This Staphylococcus aureus (strain NCTC 8325 / PS 47) protein is Ribitol-5-phosphate cytidylyltransferase 2.